Here is a 268-residue protein sequence, read N- to C-terminus: Tryptophan synthase alpha chain (268 aa).

Active-site proton acceptor residues include Glu-49 and Asp-60.

It belongs to the TrpA family. In terms of assembly, tetramer of two alpha and two beta chains.

It carries out the reaction (1S,2R)-1-C-(indol-3-yl)glycerol 3-phosphate + L-serine = D-glyceraldehyde 3-phosphate + L-tryptophan + H2O. It participates in amino-acid biosynthesis; L-tryptophan biosynthesis; L-tryptophan from chorismate: step 5/5. The alpha subunit is responsible for the aldol cleavage of indoleglycerol phosphate to indole and glyceraldehyde 3-phosphate. In Yersinia pseudotuberculosis serotype O:3 (strain YPIII), this protein is Tryptophan synthase alpha chain.